The sequence spans 367 residues: Female-specific protein transformer (367 aa).

Residues 86–280 (ESISSKKIKS…HRHHRSQERS (195 aa)) form a disordered region. The segment covering 109-129 (VKQNSPDVTQKFTKKYGSSEN) has biased composition (polar residues). Over residues 130-144 (PDFRRHSSYEKDNYH) the composition is skewed to basic and acidic residues. Over residues 195–223 (NRRRSSHRSRRGSGSPRSRRYTSRHRRRS) the composition is skewed to basic residues. Over residues 229-238 (TSWKHNPEHR) the composition is skewed to basic and acidic residues. Basic residues predominate over residues 239–257 (TSRRSRTRSPRGNRSRRRS).

Functionally, sex differentiation protein controlling female somatic sexual differentiation. May act by promoting the formation of a splicing enhancer complex. This Musca domestica (House fly) protein is Female-specific protein transformer.